The following is a 333-amino-acid chain: Meiotic drive suppressor wtf9 (333 aa).

The segment at 1–69 (MKNNYTSLKS…ENHSSGTTDN (69 aa)) is disordered. A compositionally biased stretch (basic and acidic residues) spans 19–30 (KTDHEIDLEKGP). 4 helical membrane-spanning segments follow: residues 73–95 (LLIK…VCYL), 108–130 (VEWT…LTYF), 174–191 (WVVI…TLFL), and 204–226 (LICS…RLPF).

Belongs to the WTF family. As to quaternary structure, homomer. Interacts with other proteins that exhibit high sequence similarity.

It localises to the spore membrane. The protein resides in the vacuole membrane. Acts as a suppressor component of the dual wtf meiotic drive system, and can suppress but not confer meiotic drive by compatible poisons. Wtf meiotic drive systems promote unequal transmission of alleles from the parental zygote to progeny spores by encoding a poison and an antidote from the same locus; the poison is trans-acting and forms toxic aggregates in all spores within an ascus, wherease the antidote is spore-specific and targets aggregates for degradation by the vacuole. Meiotic drive by wtf systems therefore lead to poisoning of all progeny that do not inherit the dual poison/antidote allele, or express a compatible antidote. This is Meiotic drive suppressor wtf9 from Schizosaccharomyces pombe (strain 972 / ATCC 24843) (Fission yeast).